Here is an 86-residue protein sequence, read N- to C-terminus: Small ribosomal subunit protein uS17 (86 aa).

Belongs to the universal ribosomal protein uS17 family. As to quaternary structure, part of the 30S ribosomal subunit.

Functionally, one of the primary rRNA binding proteins, it binds specifically to the 5'-end of 16S ribosomal RNA. In Streptococcus thermophilus (strain CNRZ 1066), this protein is Small ribosomal subunit protein uS17.